Reading from the N-terminus, the 861-residue chain is Isoleucine--tRNA ligase (861 aa).

The short motif at 57 to 67 is the 'HIGH' region element; that stretch reads PYANGNIHVGH. Position 549 (Glu-549) interacts with L-isoleucyl-5'-AMP. Residues 590–594 carry the 'KMSKS' region motif; that stretch reads KMSKS. Lys-593 serves as a coordination point for ATP.

It belongs to the class-I aminoacyl-tRNA synthetase family. IleS type 1 subfamily. Monomer.

Its subcellular location is the cytoplasm. The catalysed reaction is tRNA(Ile) + L-isoleucine + ATP = L-isoleucyl-tRNA(Ile) + AMP + diphosphate. In terms of biological role, catalyzes the attachment of isoleucine to tRNA(Ile). As IleRS can inadvertently accommodate and process structurally similar amino acids such as valine, to avoid such errors it has two additional distinct tRNA(Ile)-dependent editing activities. One activity is designated as 'pretransfer' editing and involves the hydrolysis of activated Val-AMP. The other activity is designated 'posttransfer' editing and involves deacylation of mischarged Val-tRNA(Ile). The sequence is that of Isoleucine--tRNA ligase from Mycoplasma pneumoniae (strain ATCC 29342 / M129 / Subtype 1) (Mycoplasmoides pneumoniae).